Reading from the N-terminus, the 427-residue chain is MRYDQEAGSSSHSLPSGSSSHSLPPTEDTPLLGPRTLSSQPKTFANVFIAIVGAGVLGLPYTFKKTGWLLGLLTLLFVSSLTFFCMMLLVHTRRKLESLSGFNSITSFGDLGESVCGPAGRLVVDVMLVLSQSGFCVSYLIFVATTMANLLSRGTEHILGLDAASIYLWGCFPFQLGLNSIPSLTHLAPLSIFADIVDVAATLVVMVQDVFIFLKRRPPLRVFGGVSVFFYGLGVAVYAFEGIGMVLPLELEAKYKDKFGRALGLAMGLISIMYGAFGLLGYMAYGEETKDIITTNLGTGVVSTLVQLGLAINLFFTFPLMMQPVYEVVERRLCSSRYSVWVRWATVLVVTLVALLVPNFADFLSLVGSSVCVVLGFVLPSLFHLQAFKNELSITRIVVDVLVFLIGVMIAITGTWTAVHEILTSKA.

The tract at residues 1-35 (MRYDQEAGSSSHSLPSGSSSHSLPPTEDTPLLGPR) is disordered. Residues 1–42 (MRYDQEAGSSSHSLPSGSSSHSLPPTEDTPLLGPRTLSSQPK) are Cytoplasmic-facing. Residues 8–24 (GSSSHSLPSGSSSHSLP) show a composition bias toward low complexity. The chain crosses the membrane as a helical span at residues 43–63 (TFANVFIAIVGAGVLGLPYTF). Over 64–69 (KKTGWL) the chain is Vacuolar. A helical transmembrane segment spans residues 70–90 (LGLLTLLFVSSLTFFCMMLLV). Residues 91 to 122 (HTRRKLESLSGFNSITSFGDLGESVCGPAGRL) lie on the Cytoplasmic side of the membrane. Residues 123-143 (VVDVMLVLSQSGFCVSYLIFV) form a helical membrane-spanning segment. The Vacuolar portion of the chain corresponds to 144–157 (ATTMANLLSRGTEH). The helical transmembrane segment at 158–178 (ILGLDAASIYLWGCFPFQLGL) threads the bilayer. The Cytoplasmic portion of the chain corresponds to 179-186 (NSIPSLTH). A helical transmembrane segment spans residues 187–207 (LAPLSIFADIVDVAATLVVMV). The Vacuolar portion of the chain corresponds to 208 to 227 (QDVFIFLKRRPPLRVFGGVS). A helical membrane pass occupies residues 228–248 (VFFYGLGVAVYAFEGIGMVLP). Residues 249–262 (LELEAKYKDKFGRA) are Cytoplasmic-facing. A helical transmembrane segment spans residues 263 to 283 (LGLAMGLISIMYGAFGLLGYM). The Vacuolar segment spans residues 284–300 (AYGEETKDIITTNLGTG). Residues 301-321 (VVSTLVQLGLAINLFFTFPLM) form a helical membrane-spanning segment. Topologically, residues 322–339 (MQPVYEVVERRLCSSRYS) are cytoplasmic. A helical membrane pass occupies residues 340-360 (VWVRWATVLVVTLVALLVPNF). Topologically, residues 361–362 (AD) are vacuolar. A helical transmembrane segment spans residues 363 to 383 (FLSLVGSSVCVVLGFVLPSLF). Over 384–396 (HLQAFKNELSITR) the chain is Cytoplasmic. Residues 397 to 417 (IVVDVLVFLIGVMIAITGTWT) form a helical membrane-spanning segment. Over 418-427 (AVHEILTSKA) the chain is Vacuolar.

The protein belongs to the amino acid/polyamine transporter 2 family. Amino acid/auxin permease (AAAP) (TC 2.A.18.8) subfamily. As to expression, ubiquitous.

The protein localises to the vacuole membrane. Functionally, translocates preferentially neutral amino acids and to a lesser extent aromatic amino acids from the vacuole to the cytoplasm. Requires ATP for function. The chain is Amino acid transporter AVT3A from Arabidopsis thaliana (Mouse-ear cress).